We begin with the raw amino-acid sequence, 289 residues long: ATP synthase gamma chain (289 aa).

Belongs to the ATPase gamma chain family. In terms of assembly, F-type ATPases have 2 components, CF(1) - the catalytic core - and CF(0) - the membrane proton channel. CF(1) has five subunits: alpha(3), beta(3), gamma(1), delta(1), epsilon(1). CF(0) has three main subunits: a, b and c.

The protein localises to the cell inner membrane. Produces ATP from ADP in the presence of a proton gradient across the membrane. The gamma chain is believed to be important in regulating ATPase activity and the flow of protons through the CF(0) complex. The polypeptide is ATP synthase gamma chain (Acinetobacter baylyi (strain ATCC 33305 / BD413 / ADP1)).